A 1065-amino-acid chain; its full sequence is Exportin-T (1065 aa).

Belongs to the exportin family.

The protein resides in the nucleus. It is found in the cytoplasm. Its function is as follows. tRNA nucleus export receptor which facilitates tRNA translocation across the nuclear pore complex. Involved in pre-tRNA splicing, probably by affecting the interaction of pre-tRNA with splicing endonuclease. The sequence is that of Exportin-T (LOS1) from Coprinopsis cinerea (strain Okayama-7 / 130 / ATCC MYA-4618 / FGSC 9003) (Inky cap fungus).